A 206-amino-acid chain; its full sequence is Large ribosomal subunit protein uL4 (206 aa).

This sequence belongs to the universal ribosomal protein uL4 family. In terms of assembly, part of the 50S ribosomal subunit.

In terms of biological role, one of the primary rRNA binding proteins, this protein initially binds near the 5'-end of the 23S rRNA. It is important during the early stages of 50S assembly. It makes multiple contacts with different domains of the 23S rRNA in the assembled 50S subunit and ribosome. Forms part of the polypeptide exit tunnel. This chain is Large ribosomal subunit protein uL4, found in Xanthobacter autotrophicus (strain ATCC BAA-1158 / Py2).